Here is a 763-residue protein sequence, read N- to C-terminus: 5-methyltetrahydropteroyltriglutamate--homocysteine methyltransferase (763 aa).

5-methyltetrahydropteroyltri-L-glutamate-binding positions include 16 to 19 (RELK) and K114. Residues 438–440 (IGS) and E491 contribute to the L-homocysteine site. L-methionine-binding positions include 438-440 (IGS) and E491. Residues 522 to 523 (RC) and W568 contribute to the 5-methyltetrahydropteroyltri-L-glutamate site. Residue D606 coordinates L-homocysteine. Residue D606 participates in L-methionine binding. Position 612 (E612) interacts with 5-methyltetrahydropteroyltri-L-glutamate. Residues H648, C650, and E672 each contribute to the Zn(2+) site. Catalysis depends on H701, which acts as the Proton donor. Zn(2+) is bound at residue C733.

Belongs to the vitamin-B12 independent methionine synthase family. It depends on Zn(2+) as a cofactor.

The enzyme catalyses 5-methyltetrahydropteroyltri-L-glutamate + L-homocysteine = tetrahydropteroyltri-L-glutamate + L-methionine. The protein operates within amino-acid biosynthesis; L-methionine biosynthesis via de novo pathway; L-methionine from L-homocysteine (MetE route): step 1/1. Its function is as follows. Catalyzes the transfer of a methyl group from 5-methyltetrahydrofolate to homocysteine resulting in methionine formation. The protein is 5-methyltetrahydropteroyltriglutamate--homocysteine methyltransferase of Parvibaculum lavamentivorans (strain DS-1 / DSM 13023 / NCIMB 13966).